The following is a 258-amino-acid chain: Acetylglutamate kinase (258 aa).

Residues 44–45, Arg-66, and Asn-158 contribute to the substrate site; that span reads GG. Residues 181 to 186 and 209 to 211 contribute to the ATP site; these read DVSGIL and IIT.

This sequence belongs to the acetylglutamate kinase family. ArgB subfamily. Homodimer.

Its subcellular location is the cytoplasm. It catalyses the reaction N-acetyl-L-glutamate + ATP = N-acetyl-L-glutamyl 5-phosphate + ADP. It functions in the pathway amino-acid biosynthesis; L-arginine biosynthesis; N(2)-acetyl-L-ornithine from L-glutamate: step 2/4. Its function is as follows. Catalyzes the ATP-dependent phosphorylation of N-acetyl-L-glutamate. This Shigella flexneri serotype 5b (strain 8401) protein is Acetylglutamate kinase.